A 495-amino-acid polypeptide reads, in one-letter code: 2-carboxy-D-arabinitol-1-phosphatase (495 aa).

Residues 1–12 (MLLFAPTPPPSP) are compositionally biased toward pro residues. The disordered stretch occupies residues 1–23 (MLLFAPTPPPSPATAHRRPGGSA). Residues 1–50 (MLLFAPTPPPSPATAHRRPGGSAASCIRCSSVRELDRSPSRPPLPPLAEA) constitute a chloroplast transit peptide. Catalysis depends on histidine 58, which acts as the Tele-phosphohistidine intermediate. Catalysis depends on glutamate 132, which acts as the Proton donor/acceptor.

The protein belongs to the phosphoglycerate mutase family.

Its subcellular location is the plastid. The protein localises to the chloroplast stroma. It carries out the reaction 2-carboxy-D-arabinitol 1-phosphate + H2O = 2-carboxy-D-arabinitol + phosphate. Inactivated by oxidized glutathione (GSSG) at pH 8.0. Phosphoglycerate mutase-like protein lacking PGM activity, but having 2-carboxy-D-arabinitol 1-phosphate (CA1P) phosphatase activity. Can dephosphorylate the closely related compounds 2-carboxy-D-arabinitol 1,5-bisphosphate (CABP) and 2-carboxy-D-ribitol-1,5-bisphosphate(CRBP), and 2,3-diphosphoglycerate. Prevents the accumulation of D-glycero-2,3-pentodiulose-1,5-bisphosphate (PDBP) a potent inhibitor of ribulose-1,5-bisphosphate carboxylase (RuBisCO). PDBP is produced during the oxidation of ribulose-1,5-bisphosphate, the substrate of RuBisCO. The protein is 2-carboxy-D-arabinitol-1-phosphatase of Triticum aestivum (Wheat).